Here is a 411-residue protein sequence, read N- to C-terminus: 2,3-bisphosphoglycerate-independent phosphoglycerate mutase (411 aa).

Belongs to the BPG-independent phosphoglycerate mutase family. A-PGAM subfamily.

It carries out the reaction (2R)-2-phosphoglycerate = (2R)-3-phosphoglycerate. Its pathway is carbohydrate degradation; glycolysis; pyruvate from D-glyceraldehyde 3-phosphate: step 3/5. Its function is as follows. Catalyzes the interconversion of 2-phosphoglycerate and 3-phosphoglycerate. The chain is 2,3-bisphosphoglycerate-independent phosphoglycerate mutase from Thermococcus kodakarensis (strain ATCC BAA-918 / JCM 12380 / KOD1) (Pyrococcus kodakaraensis (strain KOD1)).